A 1253-amino-acid polypeptide reads, in one-letter code: Cytoplasmic FMR1-interacting protein 2 (1253 aa).

An N6-acetyllysine modification is found at K1037.

It belongs to the CYFIP family. Component of the WAVE1 complex composed of ABI2, CYFIP2, BRK1, NCKAP1 and WASF1/WAVE1. Interacts with RAC1 (activated form) which causes the complex to dissociate, releasing activated WASF1. The complex can also be activated by NCK1. Interacts with SHANK3; the interaction mediates the association of SHANK3 with the WAVE1 complex. Interacts with FMR1; the interaction occurs in a RNA-dependent manner. Interacts with FXR1 and FXR2. Interacts with TMEM108 (via N-terminus); the interaction associates TMEM108 with the WAVE1 complex.

It localises to the cytoplasm. It is found in the nucleus. Its subcellular location is the perinuclear region. The protein resides in the synapse. The protein localises to the synaptosome. In terms of biological role, involved in T-cell adhesion and p53-dependent induction of apoptosis. Does not bind RNA. As component of the WAVE1 complex, required for BDNF-NTRK2 endocytic trafficking and signaling from early endosomes. The sequence is that of Cytoplasmic FMR1-interacting protein 2 from Pongo abelii (Sumatran orangutan).